The sequence spans 466 residues: GTPase Der (466 aa).

EngA-type G domains follow at residues 3-167 (PTLV…PDEP) and 176-350 (PKIA…GAAM). GTP contacts are provided by residues 9–16 (GRSNVGKS), 56–60 (DTGGF), 119–122 (NKTE), 182–189 (GRPNVGKS), 229–233 (DTAGL), and 294–297 (NKWD). Residues 351 to 435 (AHLPTPRLTR…PLRIEFRTGR (85 aa)) form the KH-like domain. Residues 433–466 (TGRNPYAGKSPAPLTEAEAKRAHRRRRYGRKKYG) are disordered. Over residues 453-466 (RAHRRRRYGRKKYG) the composition is skewed to basic residues.

This sequence belongs to the TRAFAC class TrmE-Era-EngA-EngB-Septin-like GTPase superfamily. EngA (Der) GTPase family. In terms of assembly, associates with the 50S ribosomal subunit.

GTPase that plays an essential role in the late steps of ribosome biogenesis. The protein is GTPase Der of Nitrosospira multiformis (strain ATCC 25196 / NCIMB 11849 / C 71).